Consider the following 36-residue polypeptide: U-metritoxin-Msn1a (36 aa).

A ShKT domain is found at 4-36; it reads CKDKLPACGEYRGSFCKLEKVKSNCEKTCGVKC. Cystine bridges form between Cys4–Cys36, Cys11–Cys28, and Cys19–Cys32.

This sequence belongs to the sea anemone type 1 potassium channel toxin family. Type 1b subfamily.

It is found in the secreted. It localises to the nematocyst. In terms of biological role, has hemolytic activity. Inhibits voltage-gated potassium channels (Kv1/KCNA). This chain is U-metritoxin-Msn1a, found in Metridium senile (Brown sea anemone).